A 361-amino-acid chain; its full sequence is 4-hydroxytryptamine kinase (361 aa).

ATP-binding positions include N37, K57, and 118-120; that span reads QDV. D224 is a catalytic residue. Residue 248–250 participates in ATP binding; it reads DWE.

This sequence belongs to the methylthioribose kinase family. As to quaternary structure, monomer. Requires Mg(2+) as cofactor.

The catalysed reaction is 4-hydroxytryptamine + ATP = norbaeocystin + ADP + H(+). It catalyses the reaction psilocin + ATP = psilocybin + ADP + H(+). It carries out the reaction 4-hydroxy-N,N,N-trimethyltryptamine + ATP = aeruginascin + ADP + H(+). It participates in secondary metabolite biosynthesis. Functionally, 4-hydroxytryptamine kinase; part of the gene cluster that mediates the biosynthesis of psilocybin, a psychotropic tryptamine-derived natural product. The first step in the pathway is the decarboxylation of L-tryptophan to tryptamine by the decarboxylase psiD. PsiD does not decarboxylate phenylalanine, tyrosine, or 5-hydroxy- L -tryptophan (5-HTP). 4-hydroxy-L-tryptophan is accepted as substrate by psiD as well. The cytochrome P450 monooxygenase psiH then converts tryptamine to 4-hydroxytryptamine. The kinase psiK catalyzes the 4-O-phosphorylation step by converting 4-hydroxytryptamine into norbaeocystin. The methyltransferase psiM then catalyzes iterative methyl transfer to the amino group of norbaeocystin to yield psilocybin via a monomethylated intermediate, baeocystin. 4-hydroxy-6-methyl-l-tryptophancan also be converted the decarboxylase PsiD, kinase PsiK, and methyltransferase PsiM into respectively 6-methyl-norbaeocystin, 6-methylbaeocystin, and 6-methylpsilocybin. PsiK kinase can also turn psilocin into psilocybin. This activity may represent a protective mechanism to rephosphorylate the unstable psilocin to the stable psilocybin in case of intracellular ester cleavage. Moreover, psiK is able to O-phosphorylate the quaternary amine 4-hydroxy-N,N,N-trimethyltryptamine (4-OH-TMT) to yield aeruginascin, another bioactive compound found in Psilocybe species. The sequence is that of 4-hydroxytryptamine kinase from Psilocybe cyanescens.